Reading from the N-terminus, the 1148-residue chain is Protein pianissimo A (1148 aa).

The span at 1–34 (MTSSDSSVNTTSSSFGNISISSPNHSSSTPPLNN) shows a compositional bias: low complexity. A disordered region spans residues 1–41 (MTSSDSSVNTTSSSFGNISISSPNHSSSTPPLNNGNGNNVS). The N-terminal Ras-GEF domain occupies 803–914 (KVSALSLNVL…STSGVYLPPH (112 aa)).

This sequence belongs to the RICTOR family. Part of a complex, TORC2, consisting of tor, lst8, piaA and ripA. Additional proteins, such as 14-3-3 and heat-shock proteins, may also belong to the TORC2 complex.

It is found in the cytoplasm. In terms of biological role, regulates cell growth, chemotaxis, signal relay and the actin cytoskeleton. Required for chemoattractant receptor and G protein-mediated activation of the 12 transmembrane domain adenylyl cyclase. Functions as a part of protein complex TORC2. TORC2, is presumed to be indirectly negatively modulated by rapamycin and regulates actin polarization. TORC2, but not TORC1, negatively regulates phagocytosis. This protein and dagA protein CRAC, a cytosolic regulator, are both essential for activation of the enzyme adenylyl cyclase. This protein and CRAC do not function redundantly. Both proteins are integral components of the adenylyl cyclase activation pathway. The sequence is that of Protein pianissimo A (piaA) from Dictyostelium discoideum (Social amoeba).